A 68-amino-acid chain; its full sequence is Conotoxin ArMMSK-01 (68 aa).

A signal peptide spans 1-20; the sequence is MMSKLGVLLTICMLLFPLTA. Residues 21–51 constitute a propeptide that is removed on maturation; sequence LPLDGDQPADRPAERMQDDFISEQHPLFNPI. Disulfide bonds link Cys54–Cys67, Cys55–Cys63, and Cys59–Cys66. At Pro65 the chain carries 4-hydroxyproline.

This sequence belongs to the conotoxin M superfamily. Expressed by the venom duct.

Its subcellular location is the secreted. The protein is Conotoxin ArMMSK-01 of Conus arenatus (Sand-dusted cone).